A 54-amino-acid chain; its full sequence is Large ribosomal subunit protein bL33 (54 aa).

The protein belongs to the bacterial ribosomal protein bL33 family.

This chain is Large ribosomal subunit protein bL33, found in Rhodopirellula baltica (strain DSM 10527 / NCIMB 13988 / SH1).